A 38-amino-acid polypeptide reads, in one-letter code: Phospholipase A2 1 (38 aa).

Ca(2+) is bound by residues Y28, G30, and G32.

The protein belongs to the phospholipase A2 family. Group I subfamily. Ca(2+) serves as cofactor. Expressed by the venom gland.

It is found in the secreted. It catalyses the reaction a 1,2-diacyl-sn-glycero-3-phosphocholine + H2O = a 1-acyl-sn-glycero-3-phosphocholine + a fatty acid + H(+). Snake venom phospholipase A2 (PLA2) that inhibits neuromuscular transmission by blocking acetylcholine release from the nerve termini. PLA2 catalyzes the calcium-dependent hydrolysis of the 2-acyl groups in 3-sn-phosphoglycerides. This chain is Phospholipase A2 1, found in Calliophis bivirgatus (Blue Malaysian coral snake).